Consider the following 422-residue polypeptide: Enolase (422 aa).

S41 serves as a coordination point for Mg(2+). E163 lines the (2R)-2-phosphoglycerate pocket. E204 acts as the Proton donor in catalysis. Residues D241, E284, and D311 each coordinate Mg(2+). K336 (proton acceptor) is an active-site residue. (2R)-2-phosphoglycerate is bound by residues R365, S366, and K387.

It belongs to the enolase family. As to quaternary structure, homodimer. Component of the RNA degradosome, a multiprotein complex involved in RNA processing and mRNA degradation. Mg(2+) serves as cofactor.

It localises to the cytoplasm. It is found in the secreted. The protein localises to the cell surface. The enzyme catalyses (2R)-2-phosphoglycerate = phosphoenolpyruvate + H2O. Its pathway is carbohydrate degradation; glycolysis; pyruvate from D-glyceraldehyde 3-phosphate: step 4/5. Its function is as follows. Catalyzes the reversible conversion of 2-phosphoglycerate (2-PG) into phosphoenolpyruvate (PEP). It is essential for the degradation of carbohydrates via glycolysis. In Legionella pneumophila subsp. pneumophila (strain Philadelphia 1 / ATCC 33152 / DSM 7513), this protein is Enolase.